The primary structure comprises 506 residues: NADH-quinone oxidoreductase subunit N (506 aa).

Transmembrane regions (helical) follow at residues 14–34, 40–60, 72–92, 109–129, 131–151, 166–186, 209–229, 256–276, 286–306, 314–334, 343–363, 385–405, 420–440, and 465–485; these read MVPE…DLFF, YVAL…ITLY, FVLD…AALI, GEYY…ASSV, FVTL…LVGI, VING…LYGI, LLLA…IATV, MAGF…VSVQ, MSIY…VVAL, LFAY…VALS, FYML…HGLI, AIVM…AGFI, AHYV…VYYF, and IVMS…MIGY.

It belongs to the complex I subunit 2 family. NDH-1 is composed of 14 different subunits. Subunits NuoA, H, J, K, L, M, N constitute the membrane sector of the complex.

The protein localises to the cell membrane. The catalysed reaction is a quinone + NADH + 5 H(+)(in) = a quinol + NAD(+) + 4 H(+)(out). Functionally, NDH-1 shuttles electrons from NADH, via FMN and iron-sulfur (Fe-S) centers, to quinones in the respiratory chain. The immediate electron acceptor for the enzyme in this species is believed to be a menaquinone. Couples the redox reaction to proton translocation (for every two electrons transferred, four hydrogen ions are translocated across the cytoplasmic membrane), and thus conserves the redox energy in a proton gradient. The protein is NADH-quinone oxidoreductase subunit N of Bacillus anthracis.